Here is a 153-residue protein sequence, read N- to C-terminus: NADPH-dependent 7-cyano-7-deazaguanine reductase (153 aa).

Cys51 (thioimide intermediate) is an active-site residue. Asp58 acts as the Proton donor in catalysis. Substrate contacts are provided by residues 73–75 (VES) and 92–93 (HE).

Belongs to the GTP cyclohydrolase I family. QueF type 1 subfamily.

It is found in the cytoplasm. It catalyses the reaction 7-aminomethyl-7-carbaguanine + 2 NADP(+) = 7-cyano-7-deazaguanine + 2 NADPH + 3 H(+). Its pathway is tRNA modification; tRNA-queuosine biosynthesis. In terms of biological role, catalyzes the NADPH-dependent reduction of 7-cyano-7-deazaguanine (preQ0) to 7-aminomethyl-7-deazaguanine (preQ1). This chain is NADPH-dependent 7-cyano-7-deazaguanine reductase, found in Granulibacter bethesdensis (strain ATCC BAA-1260 / CGDNIH1).